A 210-amino-acid polypeptide reads, in one-letter code: Thymidylate kinase (210 aa).

ATP is bound at residue 9 to 16 (GLEGAGKS).

Belongs to the thymidylate kinase family.

The enzyme catalyses dTMP + ATP = dTDP + ADP. In terms of biological role, phosphorylation of dTMP to form dTDP in both de novo and salvage pathways of dTTP synthesis. This chain is Thymidylate kinase, found in Aliivibrio fischeri (strain MJ11) (Vibrio fischeri).